We begin with the raw amino-acid sequence, 363 residues long: NAD(P)H-quinone oxidoreductase subunit 1, chloroplastic (363 aa).

Transmembrane regions (helical) follow at residues 30–50 (LFPI…IVWL), 98–118 (FSIG…VIPF), 127–147 (LSIG…GLLM), 165–185 (AAQS…ISLL), 203–223 (FWGW…ISSL), 248–268 (YSGI…LVSS), 300–320 (VFGT…FLFI), and 336–356 (LLNL…LLTT).

The protein belongs to the complex I subunit 1 family. As to quaternary structure, NDH is composed of at least 16 different subunits, 5 of which are encoded in the nucleus.

It is found in the plastid. Its subcellular location is the chloroplast thylakoid membrane. The enzyme catalyses a plastoquinone + NADH + (n+1) H(+)(in) = a plastoquinol + NAD(+) + n H(+)(out). The catalysed reaction is a plastoquinone + NADPH + (n+1) H(+)(in) = a plastoquinol + NADP(+) + n H(+)(out). NDH shuttles electrons from NAD(P)H:plastoquinone, via FMN and iron-sulfur (Fe-S) centers, to quinones in the photosynthetic chain and possibly in a chloroplast respiratory chain. The immediate electron acceptor for the enzyme in this species is believed to be plastoquinone. Couples the redox reaction to proton translocation, and thus conserves the redox energy in a proton gradient. This is NAD(P)H-quinone oxidoreductase subunit 1, chloroplastic from Nicotiana tomentosiformis (Tobacco).